Reading from the N-terminus, the 540-residue chain is Probable feruloyl esterase B-1 (540 aa).

A signal peptide spans 1–18 (MLVMQLLLPFLASTAAAA). Residues Asn28, Asn49, Asn66, Asn95, Asn113, and Asn195 are each glycosylated (N-linked (GlcNAc...) asparagine). 2 disulfides stabilise this stretch: Cys41-Cys90 and Cys76-Cys129. 3 disulfide bridges follow: Cys202–Cys458, Cys271–Cys288, and Cys297–Cys308. Ser203 (acyl-ester intermediate) is an active-site residue. N-linked (GlcNAc...) asparagine glycosylation occurs at Asn234. Positions 272, 275, 277, 279, and 281 each coordinate Ca(2+). N-linked (GlcNAc...) asparagine glycans are attached at residues Asn298, Asn328, and Asn367. Catalysis depends on charge relay system residues Asp417 and His457. A glycan (N-linked (GlcNAc...) asparagine) is linked at Asn506. A disulfide bridge connects residues Cys517 and Cys539.

Belongs to the tannase family. As to quaternary structure, homodimer.

It localises to the secreted. The catalysed reaction is feruloyl-polysaccharide + H2O = ferulate + polysaccharide.. Its function is as follows. Involved in degradation of plant cell walls. Hydrolyzes the feruloyl-arabinose ester bond in arabinoxylans as well as the feruloyl-galactose and feruloyl-arabinose ester bonds in pectin. This Aspergillus oryzae (strain ATCC 42149 / RIB 40) (Yellow koji mold) protein is Probable feruloyl esterase B-1 (faeB-1).